Here is a 281-residue protein sequence, read N- to C-terminus: Phytanoyl-CoA dioxygenase 1 (281 aa).

Residues K98, M137, 152–154 (HQD), and W169 contribute to the 2-oxoglutarate site. Fe cation-binding residues include H152 and D154. H237 is a Fe cation binding site. Residues S239 and R248 each coordinate 2-oxoglutarate.

The protein belongs to the PhyH family. Requires Fe cation as cofactor. L-ascorbate serves as cofactor.

It carries out the reaction phytanoyl-CoA + 2-oxoglutarate + O2 = 2-hydroxyphytanoyl-CoA + succinate + CO2. The protein operates within lipid metabolism; fatty acid metabolism. In terms of biological role, converts phytanoyl-CoA to 2-hydroxyphytanoyl-CoA. In Oryza sativa subsp. japonica (Rice), this protein is Phytanoyl-CoA dioxygenase 1.